A 435-amino-acid polypeptide reads, in one-letter code: Homoserine dehydrogenase (435 aa).

The NADPH site is built by Thr13, Val14, Arg43, and Lys105. Val14 is a binding site for NAD(+). The NADP(+) site is built by Val14, Arg43, and Lys105. Residues Glu129, Val132, Gly134, and Ile136 each contribute to the Na(+) site. The active-site Proton donor is Lys204. 2 disordered regions span residues 255–274 (ARGV…TPDR) and 377–402 (RCDD…PDHV). Composition is skewed to basic and acidic residues over residues 262–274 (RAPD…TPDR) and 377–391 (RCDD…AERR).

The protein belongs to the homoserine dehydrogenase family. It depends on a metal cation as a cofactor.

It carries out the reaction L-homoserine + NADP(+) = L-aspartate 4-semialdehyde + NADPH + H(+). The enzyme catalyses L-homoserine + NAD(+) = L-aspartate 4-semialdehyde + NADH + H(+). It participates in amino-acid biosynthesis; L-methionine biosynthesis via de novo pathway; L-homoserine from L-aspartate: step 3/3. It functions in the pathway amino-acid biosynthesis; L-threonine biosynthesis; L-threonine from L-aspartate: step 3/5. Functionally, catalyzes the conversion of L-aspartate-beta-semialdehyde (L-Asa) to L-homoserine (L-Hse), the third step in the biosynthesis of threonine and methionine from aspartate. This is Homoserine dehydrogenase (hom) from Methylobacillus glycogenes.